The chain runs to 954 residues: Glycine dehydrogenase (decarboxylating) (954 aa).

Position 704 is an N6-(pyridoxal phosphate)lysine (lysine 704).

This sequence belongs to the GcvP family. As to quaternary structure, the glycine cleavage system is composed of four proteins: P, T, L and H. It depends on pyridoxal 5'-phosphate as a cofactor.

The enzyme catalyses N(6)-[(R)-lipoyl]-L-lysyl-[glycine-cleavage complex H protein] + glycine + H(+) = N(6)-[(R)-S(8)-aminomethyldihydrolipoyl]-L-lysyl-[glycine-cleavage complex H protein] + CO2. In terms of biological role, the glycine cleavage system catalyzes the degradation of glycine. The P protein binds the alpha-amino group of glycine through its pyridoxal phosphate cofactor; CO(2) is released and the remaining methylamine moiety is then transferred to the lipoamide cofactor of the H protein. This chain is Glycine dehydrogenase (decarboxylating), found in Rhizobium meliloti (strain 1021) (Ensifer meliloti).